Here is a 1382-residue protein sequence, read N- to C-terminus: Eukaryotic translation initiation factor 3 subunit A (1382 aa).

Lysine 68 bears the N6-acetyllysine mark. Positions 82-120 (NIKSLEDVVRAYLKMAEEKTEAAKEESQQMVLDIEDLDN) form a coiled coil. The PCI domain occupies 315–498 (MQRMSTRVLL…RTLSFGSDLN (184 aa)). Residues serine 492 and serine 584 each carry the phosphoserine modification. Residues 664–835 (LDPDFIMAKQ…REERERAERA (172 aa)) form an interaction with EIF3B region. 2 disordered regions span residues 810–844 (KEEE…LREY) and 866–1382 (EERE…TVRR). Composition is skewed to basic and acidic residues over residues 866-1165 (EERE…DDSR), 1177-1328 (GWRE…DPPR), and 1336-1371 (SRDR…TKNE). Phosphoserine is present on residues serine 881, serine 882, and serine 895. Copy 1 of the repeat occupies 925–934 (DEDRSHRRDE). The interval 925–1172 (DEDRSHRRDE…DSRPGPWRPL (248 aa)) is 25 X 10 AA approximate tandem repeats of [DE]-[DE]-[DE]-R-[SEVGFPILV]-[HPSN]-[RSW]-[RL]-[DRGTIHN]-[EPMANLGDT]. The 2; truncated repeat unit spans residues 935-942 (ERPRRLGD). Repeat copies occupy residues 943-952 (DEDREPSLRP), 953-962 (DDDRVPRRGM), 963-972 (DDDRGPRRGP), 973-982 (EEDRFSRRGA), 983-992 (DDDRPSWRNT), 993-1002 (DDDRPPRRIA), 1003-1012 (DEDRGNWRHA), 1013-1022 (DDDRPPRRGL), 1023-1032 (DEDRGSWRTA), 1033-1042 (DEDRGPRRGM), 1043-1052 (DDDRGPRRGG), 1054-1063 (DDERSSWRNA), 1064-1073 (DDDRGPRRGL), 1074-1083 (DDDRGPRRGM), 1084-1093 (DDDRGPRRGM), 1094-1103 (DDDRGPRRGM), 1104-1113 (DDDRGPRRGL), 1114-1123 (DDDRGPWRNA), 1124-1133 (DDDRIPRRGA), and 1134-1143 (EDDRGPWRNM). A Phosphoserine modification is found at serine 949. A Phosphoserine modification is found at serine 1028. The 23; truncated repeat unit spans residues 1144–1152 (DDDRLSRRA). Residues 1153 to 1162 (DDDRFPRRGD) form repeat 24. The 25; approximate repeat unit spans residues 1163–1172 (DSRPGPWRPL). Phosphoserine is present on residues serine 1188, serine 1198, serine 1262, serine 1336, and serine 1364.

Interacts with EIF4G1. Component of the eukaryotic translation initiation factor 3 (eIF-3) complex, which is composed of 13 subunits: EIF3A, EIF3B, EIF3C, EIF3D, EIF3E, EIF3F, EIF3G, EIF3H, EIF3I, EIF3J, EIF3K, EIF3L and EIF3M. The eIF-3 complex appears to include 3 stable modules: module A is composed of EIF3A, EIF3B, EIF3G and EIF3I; module B is composed of EIF3F, EIF3H, and EIF3M; and module C is composed of EIF3C, EIF3D, EIF3E, EIF3L and EIF3K. EIF3C of module C binds EIF3B of module A and EIF3H of module B, thereby linking the three modules. EIF3J is a labile subunit that binds to the eIF-3 complex via EIF3B. The eIF-3 complex interacts with RPS6KB1 under conditions of nutrient depletion. Mitogenic stimulation leads to binding and activation of a complex composed of MTOR and RPTOR, leading to phosphorylation and release of RPS6KB1 and binding of EIF4B to eIF-3. Also interacts with KRT7 and PIWIL2. In terms of processing, phosphorylated. Phosphorylation is enhanced upon serum stimulation.

It is found in the cytoplasm. RNA-binding component of the eukaryotic translation initiation factor 3 (eIF-3) complex, which is required for several steps in the initiation of protein synthesis. The eIF-3 complex associates with the 40S ribosome and facilitates the recruitment of eIF-1, eIF-1A, eIF-2:GTP:methionyl-tRNAi and eIF-5 to form the 43S pre-initiation complex (43S PIC). The eIF-3 complex stimulates mRNA recruitment to the 43S PIC and scanning of the mRNA for AUG recognition. The eIF-3 complex is also required for disassembly and recycling of post-termination ribosomal complexes and subsequently prevents premature joining of the 40S and 60S ribosomal subunits prior to initiation. The eIF-3 complex specifically targets and initiates translation of a subset of mRNAs involved in cell proliferation, including cell cycling, differentiation and apoptosis, and uses different modes of RNA stem-loop binding to exert either translational activation or repression. Functionally, (Microbial infection) Essential for the initiation of translation on type-1 viral ribosomal entry sites (IRESs), like for HCV, PV, EV71 or BEV translation. Its function is as follows. (Microbial infection) In case of FCV infection, plays a role in the ribosomal termination-reinitiation event leading to the translation of VP2. The sequence is that of Eukaryotic translation initiation factor 3 subunit A from Homo sapiens (Human).